Consider the following 178-residue polypeptide: Probetacellulin (178 aa).

Positions 1–31 (MARAAPGSGASPLPLLPALALGLVILHCVVA) are cleaved as a signal peptide. Over 32–118 (DGNSTRSPED…LFYLRGDRGQ (87 aa)) the chain is Extracellular. N34 carries an N-linked (GlcNAc...) asparagine glycan. In terms of domain architecture, EGF-like spans 65–105 (HFSRCPKQYKHYCIKGRCRFVVAEQTPSCVCDEGYAGARCE). Intrachain disulfides connect C69–C82, C77–C93, and C95–C104. A propeptide spans 112–178 (LRGDRGQILV…NDDIQETSIA (67 aa)) (removed in mature form). Residues 119 to 139 (ILVICLIAVMVIFIILVVSIC) traverse the membrane as a helical segment. Over 140–178 (TCCHPLRKRRKRRKKEEEMETLGKDITPINDDIQETSIA) the chain is Cytoplasmic.

In terms of assembly, monomer. Interacts with EGFR and ERBB4. In terms of tissue distribution, expressed in a wide range of tissues, including the mammary gland.

It localises to the secreted. The protein resides in the extracellular space. It is found in the cell membrane. Growth factor that binds to EGFR, ERBB4 and other EGF receptor family members. Potent mitogen for retinal pigment epithelial cells and vascular smooth muscle cells. This is Probetacellulin (BTC) from Bos taurus (Bovine).